The chain runs to 161 residues: Monooxygenase AgnL5 (161 aa).

The protein belongs to the avfA family.

Its pathway is secondary metabolite biosynthesis. Monooxygenase; part of the gene cluster that mediates the biosynthesis of agnestins, dihydroxy-xanthone metabolites. The pathway begins with the assembly and cyclization of atrochrysone thioester by the non-reducing polyketide synthase Agnpks1. The atrochrysone carboxyl ACP thioesterase AgnL7 then breaks the thioester bond and releases the atrochrysone carboxylic acid as the first enzyme-free intermediate. The decarboxylase AgnL1 then catalyzes the concerted decarboxylation-elimination required to convert atochrysone carboxylic acid into emodin anthrone, which is further oxidized to emodin by the anthrone oxygenase AgnL2. Emodin then undergoes reduction catalyzed by the oxidoreductase AgnL4 to yield the dihydroquinone tautomer which is the substrate for reduction by the short chain dehydrogenase AgnL6 reduction to produce hydroxyketone, followed by AgnL8 dehydration and likely spontaneous autoxidation to chrysophanol. Baeyer-Villiger oxidation by the oxidase AgnL3 leads to monodictyphenone via cleavage of the C-10/C-10a bond of chrysophanol. Alternative cleavage at the C-4a/C-10 bond of chrysophanol also leads to the formation some cephalone F. Further conversion to agnestins A and B, requires reduction to dihydro-monodictyphenone, oxidation to agnestin C probably via an epoxide, and rearrangement to either agnestin A or agnestin B directly, although agnestin A or agnestin B can also interconvert. Within the cluster, AgnR1 is the only unassigned oxidoreductase present which could be involved in this conversion. However, AgnR1 seems not to be involved in this step, and thus genes involved in the proposed oxidation/reduction may be located elsewhere on the genome. Further agnestin A derivatives are probably formed by spontaneous decarboxylations, dehydrations and methanolysis reactions. This is Monooxygenase AgnL5 from Paecilomyces divaricatus (Penicillium divaricatum).